Consider the following 150-residue polypeptide: Endoribonuclease YbeY (150 aa).

Histidine 112, histidine 116, and aspartate 122 together coordinate Zn(2+).

This sequence belongs to the endoribonuclease YbeY family. Zn(2+) is required as a cofactor.

It localises to the cytoplasm. Functionally, single strand-specific metallo-endoribonuclease involved in late-stage 70S ribosome quality control and in maturation of the 3' terminus of the 16S rRNA. The protein is Endoribonuclease YbeY of Protochlamydia amoebophila (strain UWE25).